The sequence spans 234 residues: Endo-1,4-beta-xylanase 1 (234 aa).

Residues 1-21 (MVSFIFTRIILFAAAINGAVA) form the signal peptide. Asn-25 and Asn-75 each carry an N-linked (GlcNAc...) asparagine glycan. A GH11 domain is found at 38–234 (SGTPSSTGYS…SSGFSSITVA (197 aa)). The active-site Nucleophile is the Glu-124. An N-linked (GlcNAc...) asparagine glycan is attached at Asn-167. Glu-221 functions as the Proton donor in the catalytic mechanism.

The protein belongs to the glycosyl hydrolase 11 (cellulase G) family.

It is found in the secreted. It catalyses the reaction Endohydrolysis of (1-&gt;4)-beta-D-xylosidic linkages in xylans.. It functions in the pathway glycan degradation; xylan degradation. Its function is as follows. Endo-1,4-beta-xylanase involved in the hydrolysis of xylan, a major structural heterogeneous polysaccharide found in plant biomass representing the second most abundant polysaccharide in the biosphere, after cellulose. In Leucoagaricus gongylophorus (Leaf-cutting ant fungus), this protein is Endo-1,4-beta-xylanase 1 (Xyn1).